The chain runs to 359 residues: uncharacterized protein (359 aa).

The 113-residue stretch at 163-275 (VVDTSCIIDG…SKVANLQKVQ (113 aa)) folds into the PINc domain. Residues aspartate 165 and aspartate 244 each contribute to the Mg(2+) site. The 62-residue stretch at 289-350 (IYLPGDSLEL…LQTSAGRMIF (62 aa)) folds into the TRAM domain.

The protein belongs to the ycf81 family. This sequence in the central section; belongs to the PINc/VapC protein family. The cofactor is Mg(2+).

In terms of biological role, an RNase. This is an uncharacterized protein from Synechocystis sp. (strain ATCC 27184 / PCC 6803 / Kazusa).